We begin with the raw amino-acid sequence, 231 residues long: 2-C-methyl-D-erythritol 4-phosphate cytidylyltransferase (231 aa).

This sequence belongs to the IspD/TarI cytidylyltransferase family. IspD subfamily. As to quaternary structure, homodimer.

It catalyses the reaction 2-C-methyl-D-erythritol 4-phosphate + CTP + H(+) = 4-CDP-2-C-methyl-D-erythritol + diphosphate. The protein operates within isoprenoid biosynthesis; isopentenyl diphosphate biosynthesis via DXP pathway; isopentenyl diphosphate from 1-deoxy-D-xylulose 5-phosphate: step 2/6. Functionally, catalyzes the formation of 4-diphosphocytidyl-2-C-methyl-D-erythritol from CTP and 2-C-methyl-D-erythritol 4-phosphate (MEP). The polypeptide is 2-C-methyl-D-erythritol 4-phosphate cytidylyltransferase (Citrobacter koseri (strain ATCC BAA-895 / CDC 4225-83 / SGSC4696)).